We begin with the raw amino-acid sequence, 555 residues long: F-box only protein 33 (555 aa).

The F-box domain maps to 65 to 111 (AAGAASLPSELIVHIFSFLPAPDRLRASASCSHWRECLFYPALWPQL).

Part of the SCF (SKP1-CUL1-F-box) E3 ubiquitin-protein ligase complex SCF(FBXO33) formed of CUL1, SKP1, RBX1 and FBXO33. Interacts via its N-terminus with YBX1 CSD domain. Directly interacts with SKP1 and CUL1.

Its pathway is protein modification; protein ubiquitination. Functionally, substrate recognition component of a SCF (SKP1-CUL1-F-box protein) E3 ubiquitin-protein ligase complex which mediates the ubiquitination and subsequent proteasomal degradation of target proteins. Probably recognizes and binds to phosphorylated target proteins. Recognizes YBX1. The protein is F-box only protein 33 (FBXO33) of Homo sapiens (Human).